A 434-amino-acid polypeptide reads, in one-letter code: ATP-dependent protease ATPase subunit HslU (434 aa).

ATP-binding positions include I18, 60–65 (GVGKTE), D247, E312, and R384.

The protein belongs to the ClpX chaperone family. HslU subfamily. As to quaternary structure, a double ring-shaped homohexamer of HslV is capped on each side by a ring-shaped HslU homohexamer. The assembly of the HslU/HslV complex is dependent on binding of ATP.

Its subcellular location is the cytoplasm. In terms of biological role, ATPase subunit of a proteasome-like degradation complex; this subunit has chaperone activity. The binding of ATP and its subsequent hydrolysis by HslU are essential for unfolding of protein substrates subsequently hydrolyzed by HslV. HslU recognizes the N-terminal part of its protein substrates and unfolds these before they are guided to HslV for hydrolysis. The protein is ATP-dependent protease ATPase subunit HslU of Brucella suis (strain ATCC 23445 / NCTC 10510).